We begin with the raw amino-acid sequence, 586 residues long: Monoterpene synthase TPS4, chloroplastic (586 aa).

The N-terminal 47 residues, 1–47 (MAATRNLSLLAQSSQPWAGIYGSHGSPRPISSWLRRQSIAKTSYICM), are a transit peptide targeting the chloroplast. Mg(2+) contacts are provided by Asp340, Asp344, Asp485, Thr489, and Glu493. Positions 340–344 (DDIFD) match the DDXXD motif motif.

This sequence belongs to the terpene synthase family. Tpsg subfamily. As to quaternary structure, monomer. The cofactor is Mg(2+).

The protein localises to the plastid. The protein resides in the chloroplast. It catalyses the reaction (2E)-geranyl diphosphate + H2O = (2E)-geraniol + diphosphate. The protein operates within secondary metabolite biosynthesis; terpenoid biosynthesis. In terms of biological role, monoterpene synthase involved in the biosynthesis of volatile organic compounds. Mediates the conversion of (2E)-geranyl diphosphate (GPP) into the acyclic monoterpene, geraniol. Does not use (2E,6E)-farnesyl diphosphate (FPP) as substrate. This Cananga odorata (Ylang-ylang tree) protein is Monoterpene synthase TPS4, chloroplastic.